A 190-amino-acid chain; its full sequence is dCTP deaminase, dUMP-forming (190 aa).

DCTP-binding positions include 101–106 (KSSLGR), Asp119, 127–129 (TLE), Gln148, Tyr162, and Gln174. The active-site Proton donor/acceptor is Glu129. Residues 162 to 190 (YGSASAGSKYQGQRGPTPSRSYENFIKNT) form a disordered region. Residues 166 to 190 (SAGSKYQGQRGPTPSRSYENFIKNT) show a composition bias toward polar residues.

This sequence belongs to the dCTP deaminase family. Homotrimer.

It catalyses the reaction dCTP + 2 H2O = dUMP + NH4(+) + diphosphate. It functions in the pathway pyrimidine metabolism; dUMP biosynthesis; dUMP from dCTP: step 1/1. Functionally, bifunctional enzyme that catalyzes both the deamination of dCTP to dUTP and the hydrolysis of dUTP to dUMP without releasing the toxic dUTP intermediate. This is dCTP deaminase, dUMP-forming from Mycobacterium leprae (strain Br4923).